A 123-amino-acid polypeptide reads, in one-letter code: Cysteine-rich DPF motif domain-containing protein 1 (123 aa).

A disordered region spans residues 102-123 (RQDLEKRKAPSKRTPSQPGSRT). Over residues 114–123 (RTPSQPGSRT) the composition is skewed to polar residues.

The protein belongs to the CDPF1 family.

This is Cysteine-rich DPF motif domain-containing protein 1 (CDPF1) from Homo sapiens (Human).